Here is a 424-residue protein sequence, read N- to C-terminus: Phosphoribosylamine--glycine ligase (424 aa).

One can recognise an ATP-grasp domain in the interval K111–K312. I137–S189 contributes to the ATP binding site.

Belongs to the GARS family.

It catalyses the reaction 5-phospho-beta-D-ribosylamine + glycine + ATP = N(1)-(5-phospho-beta-D-ribosyl)glycinamide + ADP + phosphate + H(+). It functions in the pathway purine metabolism; IMP biosynthesis via de novo pathway; N(1)-(5-phospho-D-ribosyl)glycinamide from 5-phospho-alpha-D-ribose 1-diphosphate: step 2/2. This chain is Phosphoribosylamine--glycine ligase (purD), found in Helicobacter pylori (strain ATCC 700392 / 26695) (Campylobacter pylori).